The chain runs to 143 residues: Peptide methionine sulfoxide reductase MsrB (143 aa).

The region spanning 16 to 139 (DAELRRRLTP…NSAALNFESR (124 aa)) is the MsrB domain. The Zn(2+) site is built by Cys55, Cys58, Cys104, and Cys107. Cys128 functions as the Nucleophile in the catalytic mechanism.

The protein belongs to the MsrB Met sulfoxide reductase family. Requires Zn(2+) as cofactor.

It catalyses the reaction L-methionyl-[protein] + [thioredoxin]-disulfide + H2O = L-methionyl-(R)-S-oxide-[protein] + [thioredoxin]-dithiol. The chain is Peptide methionine sulfoxide reductase MsrB from Burkholderia cenocepacia (strain HI2424).